Here is a 109-residue protein sequence, read N- to C-terminus: Nucleoid-associated protein Spro_1136 (109 aa).

2 disordered regions span residues 1–21 and 90–109; these read MFGKGGLGNLMKQAQQMQEKM and EKMASVSNGMQLPPGFKMPF. Residues 11 to 21 are compositionally biased toward low complexity; sequence MKQAQQMQEKM.

The protein belongs to the YbaB/EbfC family. In terms of assembly, homodimer.

Its subcellular location is the cytoplasm. The protein localises to the nucleoid. Its function is as follows. Binds to DNA and alters its conformation. May be involved in regulation of gene expression, nucleoid organization and DNA protection. The chain is Nucleoid-associated protein Spro_1136 from Serratia proteamaculans (strain 568).